We begin with the raw amino-acid sequence, 288 residues long: Acetyl-coenzyme A carboxylase carboxyl transferase subunit beta (288 aa).

The CoA carboxyltransferase N-terminal domain maps to 34-288 (LFAKCPACKH…HLVAFHGGGQ (255 aa)). Cys38, Cys41, Cys56, and Cys59 together coordinate Zn(2+). A C4-type zinc finger spans residues 38–59 (CPACKHMIYKKDLGLAKICPTC).

Belongs to the AccD/PCCB family. Acetyl-CoA carboxylase is a heterohexamer composed of biotin carboxyl carrier protein (AccB), biotin carboxylase (AccC) and two subunits each of ACCase subunit alpha (AccA) and ACCase subunit beta (AccD). Zn(2+) is required as a cofactor.

Its subcellular location is the cytoplasm. It catalyses the reaction N(6)-carboxybiotinyl-L-lysyl-[protein] + acetyl-CoA = N(6)-biotinyl-L-lysyl-[protein] + malonyl-CoA. Its pathway is lipid metabolism; malonyl-CoA biosynthesis; malonyl-CoA from acetyl-CoA: step 1/1. Its function is as follows. Component of the acetyl coenzyme A carboxylase (ACC) complex. Biotin carboxylase (BC) catalyzes the carboxylation of biotin on its carrier protein (BCCP) and then the CO(2) group is transferred by the transcarboxylase to acetyl-CoA to form malonyl-CoA. In Streptococcus dysgalactiae subsp. equisimilis (strain GGS_124), this protein is Acetyl-coenzyme A carboxylase carboxyl transferase subunit beta.